The following is a 411-amino-acid chain: UPF0261 protein SACE_5696 (411 aa).

This sequence belongs to the UPF0261 family.

The polypeptide is UPF0261 protein SACE_5696 (Saccharopolyspora erythraea (strain ATCC 11635 / DSM 40517 / JCM 4748 / NBRC 13426 / NCIMB 8594 / NRRL 2338)).